The chain runs to 200 residues: dTDP-4-dehydrorhamnose 3,5-epimerase (200 aa).

Substrate contacts are provided by residues R21, E26, 45–47 (QVN), and R57. Catalysis depends on H60, which acts as the Proton acceptor. Positions 70 and 116 each coordinate substrate. Residue Y129 is the Proton donor of the active site. Substrate is bound by residues E140 and K165.

It belongs to the dTDP-4-dehydrorhamnose 3,5-epimerase family.

The catalysed reaction is dTDP-4-dehydro-6-deoxy-alpha-D-glucose = dTDP-4-dehydro-beta-L-rhamnose. Its pathway is carbohydrate biosynthesis; dTDP-L-rhamnose biosynthesis. It functions in the pathway antibiotic biosynthesis; streptomycin biosynthesis. Involved in the biosynthesis of the dihydrostreptose moiety of streptomycin. Catalyzes the epimerization of the C3' and C5'positions of dTDP-6-deoxy-D-xylo-4-hexulose, forming dTDP-6-deoxy-L-lyxo-4-hexulose. The polypeptide is dTDP-4-dehydrorhamnose 3,5-epimerase (Streptomyces griseus).